Here is a 247-residue protein sequence, read N- to C-terminus: Adenosylcobinamide-GDP ribazoletransferase (247 aa).

The next 5 helical transmembrane spans lie at 34–54 (IVMF…IFIL), 59–79 (CGIP…TGGF), 113–133 (GGLA…ELAL), 138–158 (MLAA…LLMY), and 194–214 (VLLL…AIFI).

It belongs to the CobS family. The cofactor is Mg(2+).

The protein resides in the cell inner membrane. The enzyme catalyses alpha-ribazole + adenosylcob(III)inamide-GDP = adenosylcob(III)alamin + GMP + H(+). It catalyses the reaction alpha-ribazole 5'-phosphate + adenosylcob(III)inamide-GDP = adenosylcob(III)alamin 5'-phosphate + GMP + H(+). The protein operates within cofactor biosynthesis; adenosylcobalamin biosynthesis; adenosylcobalamin from cob(II)yrinate a,c-diamide: step 7/7. Functionally, joins adenosylcobinamide-GDP and alpha-ribazole to generate adenosylcobalamin (Ado-cobalamin). Also synthesizes adenosylcobalamin 5'-phosphate from adenosylcobinamide-GDP and alpha-ribazole 5'-phosphate. The chain is Adenosylcobinamide-GDP ribazoletransferase from Salmonella typhi.